The sequence spans 149 residues: Arginine regulator (149 aa).

Belongs to the ArgR family.

It is found in the cytoplasm. It participates in amino-acid degradation; L-arginine degradation via ADI pathway. In terms of biological role, regulates the transcription of the arc operon, involved in arginine catabolism. In Bacillus cereus (strain ATCC 10987 / NRS 248), this protein is Arginine regulator (argR1).